The chain runs to 141 residues: Large ribosomal subunit protein uL11 (141 aa).

The protein belongs to the universal ribosomal protein uL11 family. As to quaternary structure, part of the ribosomal stalk of the 50S ribosomal subunit. Interacts with L10 and the large rRNA to form the base of the stalk. L10 forms an elongated spine to which L12 dimers bind in a sequential fashion forming a multimeric L10(L12)X complex. In terms of processing, one or more lysine residues are methylated.

Forms part of the ribosomal stalk which helps the ribosome interact with GTP-bound translation factors. The protein is Large ribosomal subunit protein uL11 of Campylobacter concisus (strain 13826).